Reading from the N-terminus, the 609-residue chain is UvrABC system protein C (609 aa).

The GIY-YIG domain maps to 16 to 94 (SSAGVYRMYD…IKQYMPKYNV (79 aa)). In terms of domain architecture, UVR spans 203–238 (KQVISELVAKMEEAAEQQAYEQAARFRDQIMALRRV).

It belongs to the UvrC family. In terms of assembly, interacts with UvrB in an incision complex.

Its subcellular location is the cytoplasm. In terms of biological role, the UvrABC repair system catalyzes the recognition and processing of DNA lesions. UvrC both incises the 5' and 3' sides of the lesion. The N-terminal half is responsible for the 3' incision and the C-terminal half is responsible for the 5' incision. This Shewanella oneidensis (strain ATCC 700550 / JCM 31522 / CIP 106686 / LMG 19005 / NCIMB 14063 / MR-1) protein is UvrABC system protein C.